Reading from the N-terminus, the 160-residue chain is AP-1 complex subunit sigma-2 (160 aa).

Belongs to the adaptor complexes small subunit family. Adaptor protein complex 1 (AP-1) is a heterotetramer composed of two large adaptins (gamma-type subunit AP1G1 and beta-type subunit AP1B1), a medium adaptin (mu-type subunit AP1M1 or AP1M2) and a small adaptin (sigma-type subunit AP1S1 or AP1S2 or AP1S3). Binds to MUC1. Widely expressed.

Its subcellular location is the golgi apparatus. It localises to the cytoplasmic vesicle membrane. The protein localises to the membrane. It is found in the clathrin-coated pit. Its function is as follows. Subunit of clathrin-associated adaptor protein complex 1 that plays a role in protein sorting in the late-Golgi/trans-Golgi network (TGN) and/or endosomes. The AP complexes mediate both the recruitment of clathrin to membranes and the recognition of sorting signals within the cytosolic tails of transmembrane cargo molecules. The sequence is that of AP-1 complex subunit sigma-2 (Ap1s2) from Mus musculus (Mouse).